Consider the following 421-residue polypeptide: Indole-3-pyruvate monooxygenase YUCCA8 (421 aa).

An FAD-binding site is contributed by Gly-30–Gly-35. Gly-201 to Gly-206 lines the NADP(+) pocket.

The protein belongs to the FMO family. The cofactor is FAD. Expressed in organs undergoing active growth and cell division.

The protein localises to the endoplasmic reticulum. It carries out the reaction indole-3-pyruvate + NADPH + O2 + H(+) = (indol-3-yl)acetate + CO2 + NADP(+) + H2O. Its function is as follows. Involved in auxin biosynthesis. Converts the indole-3-pyruvic acid (IPA) produced by the TAA family to indole-3-acetic acid (IAA). Seems not able to use tryptamine (TAM) as substrate. Probably responsible for auxin biosynthesis in leaves and involved in the regulation of lateral leaf growth. Required for maintaining water homeostasis and an appropriate root to shoot ratio. Required for the inhibition of root growth by ethylene in etiolated seedlings. Functions downstream of the ethylene-response transcription factor EIL1. In Oryza sativa subsp. indica (Rice), this protein is Indole-3-pyruvate monooxygenase YUCCA8.